A 38-amino-acid chain; its full sequence is Photosystem II reaction center protein L (38 aa).

Residues 17 to 37 (SLFWGLLLIFILAVLFSSYFF) traverse the membrane as a helical segment.

It belongs to the PsbL family. PSII is composed of 1 copy each of membrane proteins PsbA, PsbB, PsbC, PsbD, PsbE, PsbF, PsbH, PsbI, PsbJ, PsbK, PsbL, PsbM, PsbT, PsbX, PsbY, PsbZ, Psb30/Ycf12, at least 3 peripheral proteins of the oxygen-evolving complex and a large number of cofactors. It forms dimeric complexes.

It localises to the plastid. The protein resides in the chloroplast thylakoid membrane. Its function is as follows. One of the components of the core complex of photosystem II (PSII). PSII is a light-driven water:plastoquinone oxidoreductase that uses light energy to abstract electrons from H(2)O, generating O(2) and a proton gradient subsequently used for ATP formation. It consists of a core antenna complex that captures photons, and an electron transfer chain that converts photonic excitation into a charge separation. This subunit is found at the monomer-monomer interface and is required for correct PSII assembly and/or dimerization. The protein is Photosystem II reaction center protein L of Guillardia theta (Cryptophyte).